The chain runs to 206 residues: Small ribosomal subunit protein uS4 (206 aa).

A disordered region spans residues 18 to 46; it reads NIWGRPKSPVNRREYGPGQHGQRRKGKLS. Residues 94–156 form the S4 RNA-binding domain; that stretch reads RRLDAVVYRA…SKQNVAVLEA (63 aa).

The protein belongs to the universal ribosomal protein uS4 family. In terms of assembly, part of the 30S ribosomal subunit. Contacts protein S5. The interaction surface between S4 and S5 is involved in control of translational fidelity.

Functionally, one of the primary rRNA binding proteins, it binds directly to 16S rRNA where it nucleates assembly of the body of the 30S subunit. With S5 and S12 plays an important role in translational accuracy. This Ruegeria sp. (strain TM1040) (Silicibacter sp.) protein is Small ribosomal subunit protein uS4.